The sequence spans 570 residues: Formate--tetrahydrofolate ligase (570 aa).

65-72 provides a ligand contact to ATP; sequence TPFGEGKT.

Belongs to the formate--tetrahydrofolate ligase family.

It catalyses the reaction (6S)-5,6,7,8-tetrahydrofolate + formate + ATP = (6R)-10-formyltetrahydrofolate + ADP + phosphate. It participates in one-carbon metabolism; tetrahydrofolate interconversion. In Shewanella sediminis (strain HAW-EB3), this protein is Formate--tetrahydrofolate ligase.